The following is a 272-amino-acid chain: Ribosomal RNA large subunit methyltransferase E (272 aa).

The S-adenosyl-L-methionine site is built by Gly50, Trp52, Asp68, Asp84, and Asp109. Catalysis depends on Lys149, which acts as the Proton acceptor. The region spanning 196 to 254 (PLRRGDKFVVDIEKLGSGGDGAVLIEGFVVFVKEVEVGEKVRIKIADVKPNFAFADVEE) is the TRAM domain.

This sequence belongs to the class I-like SAM-binding methyltransferase superfamily. RNA methyltransferase RlmE family.

It is found in the cytoplasm. It carries out the reaction uridine(2552) in 23S rRNA + S-adenosyl-L-methionine = 2'-O-methyluridine(2552) in 23S rRNA + S-adenosyl-L-homocysteine + H(+). Its function is as follows. Specifically methylates the uridine in position 2552 of 23S rRNA at the 2'-O position of the ribose in the fully assembled 50S ribosomal subunit. This chain is Ribosomal RNA large subunit methyltransferase E, found in Methanosarcina acetivorans (strain ATCC 35395 / DSM 2834 / JCM 12185 / C2A).